Here is a 60-residue protein sequence, read N- to C-terminus: Metallothionein B (60 aa).

A beta region spans residues M1–C28. Residues C4, C6, C12, C14, C18, C20, C23, C25, C28, C32, C33, C35, C36, C40, C43, C47, C49, C54, C58, and C59 each contribute to the a divalent metal cation site. The tract at residues K29–Q60 is alpha.

Belongs to the metallothionein superfamily. Type 1 family.

Its function is as follows. Metallothioneins have a high content of cysteine residues that bind various heavy metals. This Trematomus bernacchii (Emerald rockcod) protein is Metallothionein B (mtb).